The following is a 328-amino-acid chain: NAD(P)H-dependent pentose reductase (328 aa).

Residue Tyr-50 is the Proton donor of the active site. His-112 is a binding site for substrate. Residues 174-175 (AN), 223-232 (SSFGPQSFVE), and 279-289 (KSNNVDRLKQN) contribute to the NAD(+) site.

The protein belongs to the aldo/keto reductase family.

In terms of biological role, pentose reductase with a broad substrate affinity involved in pentose catabolism. Has highest reductase activities with L-arabinose and D-xylose as substrates, and displays much lower activities with D-ribose, D-galactose and D-glucose. Has highest dehydrogenase activity with L-arabitol as substrate, followed by xylitol and D-sorbitol. May be responsible for the first step of the L-arabinose catabolic pathway. This is NAD(P)H-dependent pentose reductase (PRD1) from Pyricularia oryzae (strain 70-15 / ATCC MYA-4617 / FGSC 8958) (Rice blast fungus).